We begin with the raw amino-acid sequence, 344 residues long: N-acetyl-gamma-glutamyl-phosphate reductase (344 aa).

Cys-150 is an active-site residue.

It belongs to the NAGSA dehydrogenase family. Type 1 subfamily.

Its subcellular location is the cytoplasm. The enzyme catalyses N-acetyl-L-glutamate 5-semialdehyde + phosphate + NADP(+) = N-acetyl-L-glutamyl 5-phosphate + NADPH + H(+). It functions in the pathway amino-acid biosynthesis; L-arginine biosynthesis; N(2)-acetyl-L-ornithine from L-glutamate: step 3/4. Catalyzes the NADPH-dependent reduction of N-acetyl-5-glutamyl phosphate to yield N-acetyl-L-glutamate 5-semialdehyde. The protein is N-acetyl-gamma-glutamyl-phosphate reductase of Pseudomonas savastanoi pv. phaseolicola (strain 1448A / Race 6) (Pseudomonas syringae pv. phaseolicola (strain 1448A / Race 6)).